Reading from the N-terminus, the 392-residue chain is Succinyl-diaminopimelate desuccinylase (392 aa).

His-71 serves as a coordination point for Zn(2+). Asp-73 is a catalytic residue. Zn(2+) is bound at residue Asp-102. The Proton acceptor role is filled by Glu-144. The Zn(2+) site is built by Glu-145, Glu-173, and His-362.

Belongs to the peptidase M20A family. DapE subfamily. As to quaternary structure, homodimer. Zn(2+) serves as cofactor. It depends on Co(2+) as a cofactor.

It catalyses the reaction N-succinyl-(2S,6S)-2,6-diaminopimelate + H2O = (2S,6S)-2,6-diaminopimelate + succinate. It functions in the pathway amino-acid biosynthesis; L-lysine biosynthesis via DAP pathway; LL-2,6-diaminopimelate from (S)-tetrahydrodipicolinate (succinylase route): step 3/3. In terms of biological role, catalyzes the hydrolysis of N-succinyl-L,L-diaminopimelic acid (SDAP), forming succinate and LL-2,6-diaminopimelate (DAP), an intermediate involved in the bacterial biosynthesis of lysine and meso-diaminopimelic acid, an essential component of bacterial cell walls. The polypeptide is Succinyl-diaminopimelate desuccinylase (Rhodospirillum rubrum (strain ATCC 11170 / ATH 1.1.1 / DSM 467 / LMG 4362 / NCIMB 8255 / S1)).